The primary structure comprises 581 residues: Proline--tRNA ligase (581 aa).

The protein belongs to the class-II aminoacyl-tRNA synthetase family. ProS type 1 subfamily. Homodimer.

Its subcellular location is the cytoplasm. The catalysed reaction is tRNA(Pro) + L-proline + ATP = L-prolyl-tRNA(Pro) + AMP + diphosphate. Catalyzes the attachment of proline to tRNA(Pro) in a two-step reaction: proline is first activated by ATP to form Pro-AMP and then transferred to the acceptor end of tRNA(Pro). As ProRS can inadvertently accommodate and process non-cognate amino acids such as alanine and cysteine, to avoid such errors it has two additional distinct editing activities against alanine. One activity is designated as 'pretransfer' editing and involves the tRNA(Pro)-independent hydrolysis of activated Ala-AMP. The other activity is designated 'posttransfer' editing and involves deacylation of mischarged Ala-tRNA(Pro). The misacylated Cys-tRNA(Pro) is not edited by ProRS. In Polaromonas naphthalenivorans (strain CJ2), this protein is Proline--tRNA ligase.